We begin with the raw amino-acid sequence, 184 residues long: Prolyl-tRNA synthetase associated domain-containing protein 1 (184 aa).

This sequence belongs to the PRORSD1 family.

This is Prolyl-tRNA synthetase associated domain-containing protein 1 (Prorsd1) from Danio rerio (Zebrafish).